The following is a 461-amino-acid chain: Fumarate hydratase class II (461 aa).

Substrate-binding positions include S99–T101, H130–D133, S140–N142, and T188. The Proton donor/acceptor role is filled by H189. The active site involves S319. Residues S320 and K325–N327 contribute to the substrate site.

Belongs to the class-II fumarase/aspartase family. Fumarase subfamily. As to quaternary structure, homotetramer.

The protein resides in the cytoplasm. The enzyme catalyses (S)-malate = fumarate + H2O. The protein operates within carbohydrate metabolism; tricarboxylic acid cycle; (S)-malate from fumarate: step 1/1. Functionally, involved in the TCA cycle. Catalyzes the stereospecific interconversion of fumarate to L-malate. This is Fumarate hydratase class II from Prochlorococcus marinus subsp. pastoris (strain CCMP1986 / NIES-2087 / MED4).